A 484-amino-acid polypeptide reads, in one-letter code: Phosphomethylpyrimidine synthase (484 aa).

Substrate contacts are provided by residues N97, M126, Y156, H192, 212–214, 253–256, and E292; these read SRG and DSLR. A Zn(2+)-binding site is contributed by H296. Position 319 (Y319) interacts with substrate. Zn(2+) is bound at residue H360. C440, C443, and C448 together coordinate [4Fe-4S] cluster.

The protein belongs to the ThiC family. [4Fe-4S] cluster is required as a cofactor.

The enzyme catalyses 5-amino-1-(5-phospho-beta-D-ribosyl)imidazole + S-adenosyl-L-methionine = 4-amino-2-methyl-5-(phosphooxymethyl)pyrimidine + CO + 5'-deoxyadenosine + formate + L-methionine + 3 H(+). It functions in the pathway cofactor biosynthesis; thiamine diphosphate biosynthesis. Its function is as follows. Catalyzes the synthesis of the hydroxymethylpyrimidine phosphate (HMP-P) moiety of thiamine from aminoimidazole ribotide (AIR) in a radical S-adenosyl-L-methionine (SAM)-dependent reaction. In Synechococcus sp. (strain CC9605), this protein is Phosphomethylpyrimidine synthase.